Consider the following 73-residue polypeptide: Putative defensin-like protein 57 (73 aa).

A signal peptide spans 1–25 (MRFTSMIFVLVVILINSLFNFNVLA). Disulfide bonds link Cys37-Cys71, Cys41-Cys64, Cys50-Cys69, and Cys54-Cys70.

The protein belongs to the DEFL family.

The protein resides in the secreted. In Arabidopsis thaliana (Mouse-ear cress), this protein is Putative defensin-like protein 57.